We begin with the raw amino-acid sequence, 339 residues long: Glyceraldehyde-3-phosphate dehydrogenase (339 aa).

Residues 12 to 13, D34, R78, and T120 each bind NAD(+); that span reads RI. D-glyceraldehyde 3-phosphate is bound by residues 149–151, T180, 209–210, and R232; these read SCT and TG. C150 acts as the Nucleophile in catalysis. N319 is an NAD(+) binding site.

It belongs to the glyceraldehyde-3-phosphate dehydrogenase family. As to quaternary structure, homotetramer.

It localises to the cytoplasm. It catalyses the reaction D-glyceraldehyde 3-phosphate + phosphate + NAD(+) = (2R)-3-phospho-glyceroyl phosphate + NADH + H(+). The protein operates within carbohydrate degradation; glycolysis; pyruvate from D-glyceraldehyde 3-phosphate: step 1/5. Its function is as follows. Catalyzes the oxidative phosphorylation of glyceraldehyde 3-phosphate (G3P) to 1,3-bisphosphoglycerate (BPG) using the cofactor NAD. The first reaction step involves the formation of a hemiacetal intermediate between G3P and a cysteine residue, and this hemiacetal intermediate is then oxidized to a thioester, with concomitant reduction of NAD to NADH. The reduced NADH is then exchanged with the second NAD, and the thioester is attacked by a nucleophilic inorganic phosphate to produce BPG. The polypeptide is Glyceraldehyde-3-phosphate dehydrogenase (gapA) (Haemophilus influenzae (strain ATCC 51907 / DSM 11121 / KW20 / Rd)).